A 580-amino-acid chain; its full sequence is Pescadillo homolog (580 aa).

A compositionally biased stretch (acidic residues) spans 291 to 303 (EPEEENEVDEFPA). Positions 291-321 (EPEEENEVDEFPADPENAGQEEEQKKQLQEE) are disordered. The segment covering 312–321 (EEQKKQLQEE) has biased composition (basic and acidic residues). In terms of domain architecture, BRCT spans 323 to 416 (KHKSMFVGLK…MLLPVEDYFP (94 aa)). The disordered stretch occupies residues 448-496 (KGENPEDDDDDDEEDDEDEEEDDEDEDDEENEEEEEDKKLRHLENKKVG). The span at 452-483 (PEDDDDDDEEDDEDEEEDDEDEDDEENEEEEE) shows a compositional bias: acidic residues. Residues 484–494 (DKKLRHLENKK) are compositionally biased toward basic and acidic residues.

The protein belongs to the pescadillo family. As to quaternary structure, component of the PeBoW complex, composed of bop1, pes1 and wdr12. The complex is held together by bop1, which interacts with pes1 via its N-terminal domain and with wdr12 via a high-affinity interaction between the seven-bladed beta-propeller domains of the 2 proteins. The PeBoW complex associates with the 66S pre-ribosome.

The protein localises to the nucleus. The protein resides in the nucleolus. It localises to the nucleoplasm. Its function is as follows. Component of the PeBoW complex, which is required for maturation of 28S and 5.8S ribosomal RNAs and formation of the 60S ribosome. This is Pescadillo homolog (pes1) from Xenopus tropicalis (Western clawed frog).